Reading from the N-terminus, the 356-residue chain is DNA polymerase IV (356 aa).

The region spanning 7–188 (IIHIDMDAFY…IPVTKFYGVG (182 aa)) is the UmuC domain. The Mg(2+) site is built by Asp11 and Asp106. Glu107 is an active-site residue.

This sequence belongs to the DNA polymerase type-Y family. In terms of assembly, monomer. Mg(2+) serves as cofactor.

The protein localises to the cytoplasm. The catalysed reaction is DNA(n) + a 2'-deoxyribonucleoside 5'-triphosphate = DNA(n+1) + diphosphate. Functionally, poorly processive, error-prone DNA polymerase involved in untargeted mutagenesis. Copies undamaged DNA at stalled replication forks, which arise in vivo from mismatched or misaligned primer ends. These misaligned primers can be extended by PolIV. Exhibits no 3'-5' exonuclease (proofreading) activity. May be involved in translesional synthesis, in conjunction with the beta clamp from PolIII. This is DNA polymerase IV from Listeria monocytogenes serotype 4b (strain CLIP80459).